Here is a 347-residue protein sequence, read N- to C-terminus: MTVSANGRRMLRIEAKNSQTPIEAKPRWIRTTAKMGPEYRDMKNRVTGMSLHTVCQEAGCPNIHECWEDREASFLIGGDTCSRRCDFCQIKSGKPTPLDRDEPRRVAESVREMGLKYATVTGVTRDDLDDEGAWLYAEVVRKIHELNPNTGVENLTPDFSNKPELLQIVFESQPEVFAHNLETVPRIFKRIRPAFKYERSLEVIRAAHDYGLITKSNLILGMGETEEEVVEAMRDLREAGTDILTITQYLRPTSMHHPIERWVRPEEFVAHSEAAYDMGFPAVMSGPLVRSSYRSGRLYAQAMRARGREIPENLSHLNEKLDGSTQQEATNLLDKYGASEETPVAYR.

Positions 55, 60, 66, 81, 85, 88, and 292 each coordinate [4Fe-4S] cluster. A Radical SAM core domain is found at Trp67 to Pro281.

The protein belongs to the radical SAM superfamily. Lipoyl synthase family. It depends on [4Fe-4S] cluster as a cofactor.

Its subcellular location is the cytoplasm. The enzyme catalyses [[Fe-S] cluster scaffold protein carrying a second [4Fe-4S](2+) cluster] + N(6)-octanoyl-L-lysyl-[protein] + 2 oxidized [2Fe-2S]-[ferredoxin] + 2 S-adenosyl-L-methionine + 4 H(+) = [[Fe-S] cluster scaffold protein] + N(6)-[(R)-dihydrolipoyl]-L-lysyl-[protein] + 4 Fe(3+) + 2 hydrogen sulfide + 2 5'-deoxyadenosine + 2 L-methionine + 2 reduced [2Fe-2S]-[ferredoxin]. Its pathway is protein modification; protein lipoylation via endogenous pathway; protein N(6)-(lipoyl)lysine from octanoyl-[acyl-carrier-protein]: step 2/2. Catalyzes the radical-mediated insertion of two sulfur atoms into the C-6 and C-8 positions of the octanoyl moiety bound to the lipoyl domains of lipoate-dependent enzymes, thereby converting the octanoylated domains into lipoylated derivatives. This chain is Lipoyl synthase, found in Corynebacterium urealyticum (strain ATCC 43042 / DSM 7109).